The following is a 222-amino-acid chain: UPF0173 metal-dependent hydrolase Mboo_0816 (222 aa).

It belongs to the UPF0173 family.

The polypeptide is UPF0173 metal-dependent hydrolase Mboo_0816 (Methanoregula boonei (strain DSM 21154 / JCM 14090 / 6A8)).